Reading from the N-terminus, the 382-residue chain is D-galactonate dehydratase (382 aa).

Aspartate 183 lines the Mg(2+) pocket. The Proton donor role is filled by histidine 185. Residues glutamate 209 and glutamate 235 each contribute to the Mg(2+) site. Histidine 285 serves as the catalytic Proton acceptor. Residues 361-382 (NENPPDWRNPVWRHSDGSIAEW) are disordered.

This sequence belongs to the mandelate racemase/muconate lactonizing enzyme family. GalD subfamily. Mg(2+) serves as cofactor.

It catalyses the reaction D-galactonate = 2-dehydro-3-deoxy-D-galactonate + H2O. It functions in the pathway carbohydrate acid metabolism; D-galactonate degradation; D-glyceraldehyde 3-phosphate and pyruvate from D-galactonate: step 1/3. Its function is as follows. Catalyzes the dehydration of D-galactonate to 2-keto-3-deoxy-D-galactonate. The protein is D-galactonate dehydratase of Xanthomonas axonopodis pv. citri (strain 306).